The following is a 720-amino-acid chain: 1-deoxy-D-xylulose-5-phosphate synthase 1, chloroplastic (720 aa).

Residues Met-1–Ser-51 constitute a chloroplast transit peptide. The span at Leu-35–Ser-46 shows a compositional bias: basic residues. Residues Leu-35–Asp-74 are disordered. Positions Thr-56–Ser-65 are enriched in basic and acidic residues. Residues His-142 and Gly-183–Ser-185 each bind thiamine diphosphate. A Mg(2+)-binding site is contributed by Asp-214. Residues Gly-215 to Ala-216, Asn-243, Tyr-364, and Glu-446 each bind thiamine diphosphate. Asn-243 lines the Mg(2+) pocket.

It belongs to the transketolase family. DXPS subfamily. Homodimer. Mg(2+) is required as a cofactor. It depends on thiamine diphosphate as a cofactor.

It is found in the plastid. Its subcellular location is the chloroplast stroma. The catalysed reaction is D-glyceraldehyde 3-phosphate + pyruvate + H(+) = 1-deoxy-D-xylulose 5-phosphate + CO2. It participates in metabolic intermediate biosynthesis; 1-deoxy-D-xylulose 5-phosphate biosynthesis; 1-deoxy-D-xylulose 5-phosphate from D-glyceraldehyde 3-phosphate and pyruvate: step 1/1. Functionally, catalyzes the acyloin condensation reaction between C atoms 2 and 3 of pyruvate and glyceraldehyde 3-phosphate to yield 1-deoxy-D-xylulose-5-phosphate (DXP). Is a limiting enzyme for plastidic isoprenoid biosynthesis and essential for chloroplast development. This chain is 1-deoxy-D-xylulose-5-phosphate synthase 1, chloroplastic (CLA1), found in Oryza sativa subsp. japonica (Rice).